Consider the following 70-residue polypeptide: DNA-directed RNA polymerases I, II, and III subunit RPABC4 (70 aa).

Zn(2+) contacts are provided by Cys-31, Cys-34, Cys-48, and Cys-51. The C4-type zinc-finger motif lies at 31-51 (CAECSSKLSLSRTDAVRCKDC).

The protein belongs to the archaeal Rpo12/eukaryotic RPC10 RNA polymerase subunit family. As to quaternary structure, component of the RNA polymerase I (Pol I), RNA polymerase II (Pol II) and RNA polymerase III (Pol III) complexes. Component of the RNA polymerase I (Pol I) complex consisting of 14 subunits: RPA135, RPA190, RPC40, RPA14, RPB5, RPO26, RPA43, RPB8, RPA12, RPB10, RPC19, RPC10, RPA49 and RPA34. The complex is composed of a horseshoe-shaped core containing ten subunits (RPA135, RPA190, RPB5, RPO26, RPB8, RPB10, RPC10, RPA12, RPC19 and RPC40) where RPA135 and RPA190 form the DNA-binding cleft. Outside of the core, RPA14 and RPA43 form the stalk that mediates interactions with transcription initiation factors and newly synthesized RNA. Component of the RNA polymerase II (Pol II) complex consisting of 12 subunits: RPO21, RPB2, RPB3, RPB4, RPB5, RPO26, RPB7, RPB8, RPB9, RPB10 and RPC10. Component of the RNA polymerase III (Pol III) complex consisting of 17 subunits. Interacts, via its C-terminus, with TFIIIC subunit TFC4. In terms of processing, the N-terminus is blocked.

It localises to the nucleus. Its subcellular location is the nucleolus. It is found in the peroxisome. Its function is as follows. DNA-dependent RNA polymerases catalyze the transcription of DNA into RNA using the four ribonucleoside triphosphates as substrates. Common component of RNA polymerases I, II and III which synthesize ribosomal RNA precursors, mRNA precursors and many functional non-coding RNAs, and a small RNAs, such as 5S rRNA and tRNAs, respectively. RNA polymerases are composed of mobile elements that move relative to each other. In Pol II, the core element with the central large cleft comprises RPB3, RBP10, RPB11, RPB12 and regions of RPB1 and RPB2 forming the active center. In Saccharomyces cerevisiae (strain ATCC 204508 / S288c) (Baker's yeast), this protein is DNA-directed RNA polymerases I, II, and III subunit RPABC4 (RPC10).